Here is a 122-residue protein sequence, read N- to C-terminus: Large ribosomal subunit protein uL14 (122 aa).

The protein belongs to the universal ribosomal protein uL14 family. In terms of assembly, part of the 50S ribosomal subunit. Forms a cluster with proteins L3 and L19. In the 70S ribosome, L14 and L19 interact and together make contacts with the 16S rRNA in bridges B5 and B8.

In terms of biological role, binds to 23S rRNA. Forms part of two intersubunit bridges in the 70S ribosome. This is Large ribosomal subunit protein uL14 from Aeromonas salmonicida (strain A449).